Consider the following 408-residue polypeptide: Imidazolonepropionase (408 aa).

Fe(3+) is bound by residues H73 and H75. 2 residues coordinate Zn(2+): H73 and H75. The 4-imidazolone-5-propanoate site is built by R82, Y145, and H178. Residue Y145 coordinates N-formimidoyl-L-glutamate. H243 contacts Fe(3+). H243 is a binding site for Zn(2+). Q246 lines the 4-imidazolone-5-propanoate pocket. Fe(3+) is bound at residue D318. D318 contributes to the Zn(2+) binding site. 2 residues coordinate N-formimidoyl-L-glutamate: N320 and G322. 4-imidazolone-5-propanoate is bound at residue S323.

It belongs to the metallo-dependent hydrolases superfamily. HutI family. Requires Zn(2+) as cofactor. The cofactor is Fe(3+).

It localises to the cytoplasm. The catalysed reaction is 4-imidazolone-5-propanoate + H2O = N-formimidoyl-L-glutamate. It participates in amino-acid degradation; L-histidine degradation into L-glutamate; N-formimidoyl-L-glutamate from L-histidine: step 3/3. Functionally, catalyzes the hydrolytic cleavage of the carbon-nitrogen bond in imidazolone-5-propanoate to yield N-formimidoyl-L-glutamate. It is the third step in the universal histidine degradation pathway. This is Imidazolonepropionase from Shewanella woodyi (strain ATCC 51908 / MS32).